We begin with the raw amino-acid sequence, 215 residues long: MTQSLADMRRDYTRDGLTEAQAPAEPFALFHQWFAEAVKTEQAPVEANAMTLATVDADGRPHCRILLLKGLDEQGFTFFTNYESAKGQHLAANPFAAMTFFWPTLERQVRIEGRVVKVTPEESDAYYQVRPLGSRLGAWASPQSRVINGRGELEDLLKATEQRFTDTQPHCPEHWGGYRLLPERVEFWQGRASRLHDRLNYRVQGADWILERLAP.

Substrate contacts are provided by residues 9–12 (RRDY) and lysine 69. Residues 64-69 (RILLLK), 79-80 (FT), lysine 86, and glutamine 108 each bind FMN. 3 residues coordinate substrate: tyrosine 126, arginine 130, and serine 134. FMN contacts are provided by residues 143-144 (QS) and tryptophan 188. 194-196 (RLH) lines the substrate pocket. Position 198 (arginine 198) interacts with FMN.

Belongs to the pyridoxamine 5'-phosphate oxidase family. Homodimer. FMN serves as cofactor.

The catalysed reaction is pyridoxamine 5'-phosphate + O2 + H2O = pyridoxal 5'-phosphate + H2O2 + NH4(+). The enzyme catalyses pyridoxine 5'-phosphate + O2 = pyridoxal 5'-phosphate + H2O2. Its pathway is cofactor metabolism; pyridoxal 5'-phosphate salvage; pyridoxal 5'-phosphate from pyridoxamine 5'-phosphate: step 1/1. It participates in cofactor metabolism; pyridoxal 5'-phosphate salvage; pyridoxal 5'-phosphate from pyridoxine 5'-phosphate: step 1/1. Catalyzes the oxidation of either pyridoxine 5'-phosphate (PNP) or pyridoxamine 5'-phosphate (PMP) into pyridoxal 5'-phosphate (PLP). The polypeptide is Pyridoxine/pyridoxamine 5'-phosphate oxidase (Pseudomonas fluorescens (strain Pf0-1)).